A 1386-amino-acid polypeptide reads, in one-letter code: Rab3 GTPase-activating protein non-catalytic subunit (1386 aa).

The tract at residues 31 to 69 is disordered; it reads GALRRDPSKTSNWEDDSWGAWEETEPQEPEEEGNTSKTQ. The residue at position 38 (serine 38) is a Phosphoserine. Residues 43–63 show a composition bias toward acidic residues; that stretch reads WEDDSWGAWEETEPQEPEEEG. Serine 448 carries the post-translational modification Phosphoserine. Threonine 899 carries the post-translational modification Phosphothreonine. Serine 914 is subject to Phosphoserine. The span at 959 to 973 shows a compositional bias: basic and acidic residues; it reads REKDVENPDEPREGI. Residues 959–982 form a disordered region; that stretch reads REKDVENPDEPREGIARSPPEVSE. Serine 976 is subject to Phosphoserine.

The protein belongs to the Rab3-GAP regulatory subunit family. In terms of assembly, the Rab3 GTPase-activating complex is a heterodimer composed of Rab3gap1 and Rab3gap2. The Rab3 GTPase-activating complex interacts with DMXL2. Interacts with LMAN1.

It is found in the cytoplasm. The protein resides in the endoplasmic reticulum. Regulatory subunit of the Rab3 GTPase-activating (Rab3GAP) complex composed of RAB3GAP1 and RAB3GAP2, which has GTPase-activating protein (GAP) activity towards various Rab3 subfamily members (RAB3A, RAB3B, RAB3C and RAB3D), RAB5A and RAB43, and guanine nucleotide exchange factor (GEF) activity towards RAB18. As part of the Rab3GAP complex, acts as a GAP for Rab3 proteins by converting active RAB3-GTP to the inactive form RAB3-GDP. Rab3 proteins are involved in regulated exocytosis of neurotransmitters and hormones. The Rab3GAP complex acts as a GEF for RAB18 by promoting the conversion of inactive RAB18-GDP to the active form RAB18-GTP. Recruits and stabilizes RAB18 at the cis-Golgi membrane in fibroblasts where RAB18 is most likely activated. Also involved in RAB18 recruitment at the endoplasmic reticulum (ER) membrane where it maintains proper ER structure. Required for normal eye and brain development. May participate in neurodevelopmental processes such as proliferation, migration and differentiation before synapse formation, and non-synaptic vesicular release of neurotransmitters. This is Rab3 GTPase-activating protein non-catalytic subunit from Rattus norvegicus (Rat).